We begin with the raw amino-acid sequence, 179 residues long: Large ribosomal subunit protein uL5 (179 aa).

It belongs to the universal ribosomal protein uL5 family. Part of the 50S ribosomal subunit; part of the 5S rRNA/L5/L18/L25 subcomplex. Contacts the 5S rRNA and the P site tRNA. Forms a bridge to the 30S subunit in the 70S ribosome.

In terms of biological role, this is one of the proteins that bind and probably mediate the attachment of the 5S RNA into the large ribosomal subunit, where it forms part of the central protuberance. In the 70S ribosome it contacts protein S13 of the 30S subunit (bridge B1b), connecting the 2 subunits; this bridge is implicated in subunit movement. Contacts the P site tRNA; the 5S rRNA and some of its associated proteins might help stabilize positioning of ribosome-bound tRNAs. The polypeptide is Large ribosomal subunit protein uL5 (Alkaliphilus metalliredigens (strain QYMF)).